The chain runs to 147 residues: uncharacterized protein (147 aa).

Over 1-16 (MDHRAAFGYFSNACFK) the chain is Extracellular. Residues 17-37 (VMLFSSLLASFASSVAFISLI) form a helical membrane-spanning segment. At 38 to 105 (TFSLSSSESP…FEAAFFLLTN (68 aa)) the chain is on the cytoplasmic side. A helical transmembrane segment spans residues 106 to 126 (EMIFFILYYFFSCLMFFYVAS). Residues 127–147 (ERNTNPKILQTINTKPLYIKN) lie on the Extracellular side of the membrane.

The protein resides in the membrane. This is an uncharacterized protein from Saccharomyces cerevisiae (strain ATCC 204508 / S288c) (Baker's yeast).